The sequence spans 178 residues: Oligoribonuclease (178 aa).

An Exonuclease domain is found at 7–168 (LIWIDLEMTG…DDIRESIAEL (162 aa)). Tyrosine 128 is an active-site residue.

Belongs to the oligoribonuclease family.

The protein localises to the cytoplasm. Its function is as follows. 3'-to-5' exoribonuclease specific for small oligoribonucleotides. The sequence is that of Oligoribonuclease from Francisella tularensis subsp. holarctica (strain OSU18).